Reading from the N-terminus, the 370-residue chain is Calcium/calmodulin-dependent protein kinase type 1 (370 aa).

In terms of domain architecture, Protein kinase spans 20–276 (YDFRDVLGTG…CEQALQHPWI (257 aa)). ATP contacts are provided by residues 26 to 34 (LGTGAFSEV) and Lys49. Residue Lys59 forms a Glycyl lysine isopeptide (Lys-Gly) (interchain with G-Cter in ubiquitin) linkage. The Proton acceptor role is filled by Asp141. At Thr177 the chain carries Phosphothreonine; by CaMKK1 and CaMKK2. Residues 276–316 (IAGDTALDKNIHQSVSEQIKKNFAKSKWKQAFNATAVVRHM) are autoinhibitory domain. A calmodulin-binding region spans residues 296 to 317 (KNFAKSKWKQAFNATAVVRHMR). The Nuclear export signal motif lies at 315 to 321 (HMRKLQL). At Ser363 the chain carries Phosphoserine.

Belongs to the protein kinase superfamily. CAMK Ser/Thr protein kinase family. CaMK subfamily. In terms of assembly, monomer. Interacts with XPO1. Interacts with MARK2, ARHGEF7/BETAPIX and GIT1. Phosphorylated by CaMKK1 and CaMKK2 on Thr-177. In terms of processing, polybiquitinated by the E3 ubiquitin-protein ligase complex SCF(FBXL12), leading to proteasomal degradation. As to expression, widely expressed. Expressed in cells of the zona glomerulosa of the adrenal cortex.

Its subcellular location is the cytoplasm. It localises to the nucleus. The catalysed reaction is L-seryl-[protein] + ATP = O-phospho-L-seryl-[protein] + ADP + H(+). It catalyses the reaction L-threonyl-[protein] + ATP = O-phospho-L-threonyl-[protein] + ADP + H(+). Its activity is regulated as follows. Activated by Ca(2+)/calmodulin. Binding of calmodulin results in conformational change that relieves intrasteric autoinhibition and allows phosphorylation of Thr-177 within the activation loop by CaMKK1 or CaMKK2. Phosphorylation of Thr-177 results in several fold increase in total activity. Unlike CaMK4, is unable to exhibit autonomous activity after Ca(2+)/calmodulin activation. Functionally, calcium/calmodulin-dependent protein kinase that operates in the calcium-triggered CaMKK-CaMK1 signaling cascade and, upon calcium influx, regulates transcription activators activity, cell cycle, hormone production, cell differentiation, actin filament organization and neurite outgrowth. Recognizes the substrate consensus sequence [MVLIF]-x-R-x(2)-[ST]-x(3)-[MVLIF]. Regulates axonal extension and growth cone motility in hippocampal and cerebellar nerve cells. Upon NMDA receptor-mediated Ca(2+) elevation, promotes dendritic growth in hippocampal neurons and is essential in synapses for full long-term potentiation (LTP) and ERK2-dependent translational activation. Downstream of NMDA receptors, promotes the formation of spines and synapses in hippocampal neurons by phosphorylating ARHGEF7/BETAPIX on 'Ser-694', which results in the enhancement of ARHGEF7 activity and activation of RAC1. Promotes neuronal differentiation and neurite outgrowth by activation and phosphorylation of MARK2 on 'Ser-91', 'Ser-92', 'Ser-93' and 'Ser-294'. Promotes nuclear export of HDAC5 and binding to 14-3-3 by phosphorylation of 'Ser-259' and 'Ser-498' in the regulation of muscle cell differentiation. Regulates NUMB-mediated endocytosis by phosphorylation of NUMB on 'Ser-276' and 'Ser-295'. Involved in the regulation of basal and estrogen-stimulated migration of medulloblastoma cells through ARHGEF7/BETAPIX phosphorylation. Is required for proper activation of cyclin-D1/CDK4 complex during G1 progression in diploid fibroblasts. Plays a role in K(+) and ANG2-mediated regulation of the aldosterone synthase (CYP11B2) to produce aldosterone in the adrenal cortex. Phosphorylates EIF4G3/eIF4GII. In vitro phosphorylates CREB1, ATF1, CFTR, MYL9 and SYN1/synapsin I. The polypeptide is Calcium/calmodulin-dependent protein kinase type 1 (CAMK1) (Homo sapiens (Human)).